A 258-amino-acid polypeptide reads, in one-letter code: Venom plasminogen activator GPV-PA (258 aa).

Positions Met-1–Ala-18 are cleaved as a signal peptide. The propeptide occupies Gln-19–Leu-24. In terms of domain architecture, Peptidase S1 spans Val-25–Ala-249. 6 disulfides stabilise this stretch: Cys-31–Cys-163, Cys-50–Cys-66, Cys-98–Cys-256, Cys-142–Cys-210, Cys-174–Cys-189, and Cys-200–Cys-225. N-linked (GlcNAc...) asparagine glycosylation occurs at Asn-44. Residues His-65 and Asp-110 each act as charge relay system in the active site. Asn-121 and Asn-185 each carry an N-linked (GlcNAc...) asparagine glycan. Residue Ser-204 is the Charge relay system of the active site.

This sequence belongs to the peptidase S1 family. Snake venom subfamily. As to quaternary structure, monomer. As to expression, expressed by the venom gland.

It localises to the secreted. Its function is as follows. Snake venom serine protease that activates plasminogen. This is Venom plasminogen activator GPV-PA from Trimeresurus albolabris (White-lipped pit viper).